Reading from the N-terminus, the 339-residue chain is Beta-ketoacyl-[acyl-carrier-protein] synthase III (339 aa).

Residues cysteine 121 and histidine 257 contribute to the active site. An ACP-binding region spans residues 258–262 (QANLR). The active site involves asparagine 288.

The protein belongs to the thiolase-like superfamily. FabH family. In terms of assembly, homodimer.

It localises to the cytoplasm. The catalysed reaction is malonyl-[ACP] + propanoyl-CoA + H(+) = 3-oxopentanoyl-[ACP] + CO2 + CoA. The enzyme catalyses 2-methylpropanoyl-CoA + malonyl-[ACP] + H(+) = 4-methyl-3-oxopentanoyl-[ACP] + CO2 + CoA. It carries out the reaction malonyl-[ACP] + acetyl-CoA + H(+) = 3-oxobutanoyl-[ACP] + CO2 + CoA. It catalyses the reaction butanoyl-CoA + malonyl-[ACP] + H(+) = 3-oxohexanoyl-[ACP] + CO2 + CoA. It functions in the pathway lipid metabolism; fatty acid biosynthesis. Its function is as follows. Catalyzes the condensation reaction of fatty acid synthesis by the addition to an acyl acceptor of two carbons from malonyl-ACP. Catalyzes the first condensation reaction which initiates fatty acid synthesis and may therefore play a role in governing the total rate of fatty acid production. Possesses both acetoacetyl-ACP synthase and acetyl transacylase activities. Propionyl-CoA and isobutyryl-CoA were the two most preferred substrates, although acetyl-CoA and butyryl-CoA could also be accepted and elongated. Involved in the biosynthesis of R1128 polyketide. The sequence is that of Beta-ketoacyl-[acyl-carrier-protein] synthase III from Streptomyces lividans.